The primary structure comprises 184 residues: MNRRSERIWIEFIMGSRKTSNFCWACILLLGSLGFLLVGISSYLGRNLISLFPSQQINFFPQGIVMSFYGIAGLFISSYLWSTILWNIGSGYDRFDRKEGIVCIFRWGFPGINRRIFLRVFMGDIQSIRIEVKGGVYPRRVLYMDIRGQGSVPLTRTDENFTPREIEQKAAESAYFLRVPIEVF.

Transmembrane regions (helical) follow at residues 22 to 42 and 64 to 84; these read FCWA…GISS and IVMS…WSTI.

Belongs to the Ycf4 family.

Its subcellular location is the plastid. The protein resides in the chloroplast thylakoid membrane. Its function is as follows. Seems to be required for the assembly of the photosystem I complex. The protein is Photosystem I assembly protein Ycf4 of Piper cenocladum (Ant piper).